A 419-amino-acid chain; its full sequence is E3 ubiquitin-protein ligase RNF130 (419 aa).

The signal sequence occupies residues 1-27 (MSGAARAGPARLAALALLTCSLWPTRA). At 28–194 (DNASQEYYTA…MPPKNFSRGS (167 aa)) the chain is on the extracellular side. N-linked (GlcNAc...) asparagine glycosylation is found at Asn-29, Asn-40, Asn-112, Asn-135, Asn-172, and Asn-189. Residues 105-176 (IALLQRGNCT…SYLEKNISVQ (72 aa)) enclose the PA domain. The helical transmembrane segment at 195 to 217 (LVFVSISFIVLMIISSAWLIFYF) threads the bilayer. Topologically, residues 218-419 (IQKIRYTNAR…SLNANEVEWF (202 aa)) are cytoplasmic. An RING-type zinc finger spans residues 264–305 (CAVCIESYKQNDVVRVLPCKHVFHKSCVDPWLSEHCTCPMCK). Phosphoserine is present on Ser-341.

In testis sections, expressed in interstitial tissue and seminiferous tubules. In tubules, expression is mainly in postmeiotic germ cells and to a much lesser extent in Sertoli cells (at protein level). Expressed at high levels in liver, lung, stomach, heart and thymus.

It is found in the membrane. The protein resides in the cytoplasm. The enzyme catalyses S-ubiquitinyl-[E2 ubiquitin-conjugating enzyme]-L-cysteine + [acceptor protein]-L-lysine = [E2 ubiquitin-conjugating enzyme]-L-cysteine + N(6)-ubiquitinyl-[acceptor protein]-L-lysine.. Its pathway is protein modification; protein ubiquitination. Acts as an E3 ubiquitin-protein ligase. May have a role during the programmed cell death of hematopoietic cells. This is E3 ubiquitin-protein ligase RNF130 from Rattus norvegicus (Rat).